Consider the following 129-residue polypeptide: uncharacterized protein (129 aa).

Residues 23 to 101 (KASTSSESCQ…TAATRTTSKK (79 aa)) form a disordered region. 2 stretches are compositionally biased toward basic and acidic residues: residues 31 to 40 (CQRRGVRDDT) and 67 to 80 (EGDRGPPRRPEKEP).

This is an uncharacterized protein from Ictaluridae (bullhead catfishes).